The chain runs to 1307 residues: tRNA(adenine(34)) deaminase, chloroplastic (1307 aa).

Residues 1 to 55 constitute a chloroplast transit peptide; that stretch reads MFNTYTNSLQWPIRSRNQQDYCSLLPERSESYKLSKAYTSSRCYCVSSRSSCCCC. Disordered regions lie at residues 245–377, 439–458, 544–563, 576–618, 753–807, 837–957, and 975–1073; these read EYIG…ESTG, SSED…SSQE, HNPL…SHTS, EKRL…GQTT, GVIN…ATEG, SRAG…EEGG, and LPSR…SVSA. Low complexity predominate over residues 267–278; sequence SSCSSYYSLASS. Residues 280 to 309 are a coiled coil; that stretch reads EFESDTEDQEEDVEIYRENVRSSEKKVVDQ. Over residues 281–292 the composition is skewed to acidic residues; sequence FESDTEDQEEDV. The segment covering 293-321 has biased composition (basic and acidic residues); sequence EIYRENVRSSEKKVVDQSAKRLKSRKEAS. Polar residues predominate over residues 367-377; that stretch reads QTENRVSESTG. Residues 439–448 show a composition bias toward basic and acidic residues; the sequence is SSEDRVSEMR. 2 stretches are compositionally biased toward polar residues: residues 546 to 563 and 582 to 591; these read PLQT…SHTS and QGSTTAVQSD. Basic and acidic residues-rich tracts occupy residues 592 to 615 and 760 to 771; these read SKVE…KKDG and EEQRAESNQLKR. The span at 852–863 shows a compositional bias: polar residues; sequence SSPNESVSSATW. The span at 866–883 shows a compositional bias: basic and acidic residues; it reads GREHDGSSDDNTKGDKVL. Composition is skewed to polar residues over residues 895 to 907, 924 to 947, and 1045 to 1073; these read VGQT…SEYP, SSPS…SGNQ, and SGSS…SVSA. The CMP/dCMP-type deaminase domain occupies 1108-1230; sequence TVDEIFMREA…RLFPGGEGNG (123 aa). Zn(2+) is bound at residue histidine 1159. Glutamate 1161 serves as the catalytic Proton donor. Residues cysteine 1189 and cysteine 1192 each coordinate Zn(2+). Residues 1268-1293 are disordered; it reads QLRRKKKDKNSDPPTPTDHHHHHLPK.

This sequence belongs to the cytidine and deoxycytidylate deaminase family. As to quaternary structure, homodimer. Requires Zn(2+) as cofactor.

Its subcellular location is the plastid. The protein localises to the chloroplast. It carries out the reaction adenosine(34) in tRNA + H2O + H(+) = inosine(34) in tRNA + NH4(+). Its function is as follows. Deaminates adenosines to inosines in tRNA-Arg(ACG). Exclusively involved in A-to-I editing of the prokaryote-type chloroplast-tRNA and not involved in C-to-U editing. The polypeptide is tRNA(adenine(34)) deaminase, chloroplastic (TADA) (Arabidopsis thaliana (Mouse-ear cress)).